We begin with the raw amino-acid sequence, 376 residues long: Non-structural protein NS2 (376 aa).

The span at 163–188 (EEREKGAVEQPHKPAFKTERGMNRPD) shows a compositional bias: basic and acidic residues. Positions 163-201 (EEREKGAVEQPHKPAFKTERGMNRPDSDEDQNPAGGVVN) are disordered.

Belongs to the orbivirus non-structural protein NS2 family.

In terms of biological role, single-stranded RNA-binding protein. The chain is Non-structural protein NS2 (Segment-8) from Antilocapra americana (Pronghorn).